Consider the following 819-residue polypeptide: MGDSGDAVMARWLQSAGLQHLAASSTSSSSASTAGGGVDPRGGGGVGVGALGGGAGGGSLLPSLLMQGYGPQSIEEKQRLYMLLRSLNFNGETAPPSISEPYTPTAQSFGGGNSLEGFYSPELRGELGAGLLDLHAMDDTELLSEDVASEPFEPSPFIPKEMDEDDDDMLPGSQPGPSDNYNAVANEKESTARENNVAKIKVVVRKRPLNRKEVSRKEEDIITVHDSSSLTVYEPKLKVDLTAYVEKHEFCFDAVLDEQVSNDEVYRETVEPIIPIIFQRTKATCFAYGQTGSGKTYTMQPLPLRAAQDMVRLLHQPVYRNQNFKLWLSYFEIYGGKLFDLLSDRRQLLMREDGKKQVCIVGLQEFEVSDVQIVKEYIERGNAARSTGSTGANEESSRSHAILQLAIKKHIIVTDTRRQRDRDANESKNTKAVGKISFIDLAGSERGADTTDNDRQTRIEGAEINKSLLALKECIRALDNDQIHIPFRGSKLTEVLRDSFVGNSRTVMISCISPNAGSCEHTLNTLRYADRVKSLSKGSNTRKEQPTGPTIPSSKDSSSAPSYPMPIETEEIANQIQEKRPVETSRKAAENFTSNSSMEPDRNPVSMIPSYSNRGKEENGSSGLNDRERVDLNSSRISYNSKPQSVQSSANLQEEEKVTKVSPPRRKAYRDDKPERQSNYAKKDSGPETSRPGYKVQQAKQLQQQQRPTSASASQNSSRQSEKESSCDDVEIDAILEEEEALIAAHRKEIENTMEIVREEMNLLAEVDQPGSLIDNYVTQLSFLLSRKAAGLVSLQARLARFQHRLKEQEILSRKKSSR.

A disordered region spans residues 150-178 (EPFEPSPFIPKEMDEDDDDMLPGSQPGPS). The Kinesin motor domain maps to 199–535 (KIKVVVRKRP…LRYADRVKSL (337 aa)). An ATP-binding site is contributed by 289 to 296 (GQTGSGKT). The interval 534–729 (SLSKGSNTRK…QSEKESSCDD (196 aa)) is disordered. Residues 550-562 (TIPSSKDSSSAPS) show a composition bias toward low complexity. Composition is skewed to basic and acidic residues over residues 577 to 589 (QEKR…RKAA) and 614 to 631 (RGKE…ERVD). Polar residues predominate over residues 632 to 652 (LNSSRISYNSKPQSVQSSANL). A compositionally biased stretch (basic and acidic residues) spans 669–686 (YRDDKPERQSNYAKKDSG). Positions 697 to 719 (QQAKQLQQQQRPTSASASQNSSR) are enriched in low complexity. Residues 736–767 (LEEEEALIAAHRKEIENTMEIVREEMNLLAEV) are a coiled coil.

This sequence belongs to the TRAFAC class myosin-kinesin ATPase superfamily. Kinesin family. KIN-13 subfamily. Ubiquitous.

The protein resides in the microsome. This is Kinesin-like protein KIN-13A from Oryza sativa subsp. japonica (Rice).